The sequence spans 154 residues: Fluoride-specific ion channel FluC 1 (154 aa).

Helical transmembrane passes span 28-48, 59-79, 91-111, and 124-144; these read VVAV…AASL, WTTF…MVVI, PFFG…AVDS, and LAYL…AAWA. Residues Gly-99 and Thr-102 each contribute to the Na(+) site.

This sequence belongs to the fluoride channel Fluc/FEX (TC 1.A.43) family.

Its subcellular location is the cell membrane. The catalysed reaction is fluoride(in) = fluoride(out). Its activity is regulated as follows. Na(+) is not transported, but it plays an essential structural role and its presence is essential for fluoride channel function. In terms of biological role, fluoride-specific ion channel. Important for reducing fluoride concentration in the cell, thus reducing its toxicity. This chain is Fluoride-specific ion channel FluC 1, found in Streptomyces coelicolor (strain ATCC BAA-471 / A3(2) / M145).